We begin with the raw amino-acid sequence, 215 residues long: Nascent polypeptide-associated complex subunit alpha-2 (215 aa).

The disordered stretch occupies residues 1-51 (MPGEATETVPATEQELPQSQAETGSGTASDSGESVPGIEEQDSTQTTTQKA). Residues 9–32 (VPATEQELPQSQAETGSGTASDSG) show a composition bias toward polar residues. Serine 43 and serine 132 each carry phosphoserine. The NAC-A/B domain occupies 70–135 (SRSEKRARKA…AKIQDLSQQA (66 aa)). Residue lysine 142 is modified to N6-acetyllysine; alternate. Lysine 142 participates in a covalent cross-link: Glycyl lysine isopeptide (Lys-Gly) (interchain with G-Cter in SUMO2); alternate. The residue at position 161 (threonine 161) is a Phosphothreonine. A phosphoserine mark is found at serine 166, serine 186, serine 191, and serine 203. The 38-residue stretch at 176–213 (VEVKDVKLVMSQANVSRAKAVRALKNNSNDIVNAIMEL) folds into the UBA domain. Threonine 214 is subject to Phosphothreonine.

Belongs to the NAC-alpha family. As to quaternary structure, part of the nascent polypeptide-associated complex (NAC), consisting of NACA and BTF3. NAC associates with ribosomes through the BTF3 subunit. Both subunits can contact nascent polypeptide chains. In terms of tissue distribution, expressed specifically in testis and skeletal muscle.

The protein resides in the cytoplasm. It localises to the nucleus. Functionally, prevents inappropriate targeting of non-secretory polypeptides to the endoplasmic reticulum (ER). Binds to nascent polypeptide chains as they emerge from the ribosome and blocks their interaction with the signal recognition particle (SRP), which normally targets nascent secretory peptides to the ER. Also reduces the inherent affinity of ribosomes for protein translocation sites in the ER membrane (M sites). The chain is Nascent polypeptide-associated complex subunit alpha-2 (NACA2) from Homo sapiens (Human).